Reading from the N-terminus, the 566-residue chain is Potassium-transporting ATPase potassium-binding subunit (566 aa).

12 consecutive transmembrane segments (helical) span residues 6–26 (VALLTSYMLVLLLLAWPLGIA), 60–80 (AAAILVFNLLGAALLFLLMLF), 128–148 (LGLTVHNFLSAANGIAVAFVL), 167–187 (IWRITVYLLLPLSVIYALFLA), 247–267 (LTNFVQMVSILLIPAALCICF), 276–296 (VGSALLWTMGIMLSVAALLIM), 331–351 (FGLWASSLFATITTAASCGAV), 361–381 (LGGLIPMVLMQLGEVVFGGVG), 383–403 (GWYGMMLFVFLTVFLAGLMIG), 423–443 (IGLLIPPALVLLGTALAVILP), 492–512 (LMFVGRFGVMLPVLAIAGALI), and 530–550 (LFVGMLIGVVLLIGALTFIPA).

It belongs to the KdpA family. In terms of assembly, the system is composed of three essential subunits: KdpA, KdpB and KdpC.

It localises to the cell inner membrane. Its function is as follows. Part of the high-affinity ATP-driven potassium transport (or Kdp) system, which catalyzes the hydrolysis of ATP coupled with the electrogenic transport of potassium into the cytoplasm. This subunit binds the periplasmic potassium ions and delivers the ions to the membrane domain of KdpB through an intramembrane tunnel. The protein is Potassium-transporting ATPase potassium-binding subunit of Tolumonas auensis (strain DSM 9187 / NBRC 110442 / TA 4).